The following is a 304-amino-acid chain: E3 ubiquitin-protein ligase RNF115 (304 aa).

At Ala2 the chain carries N-acetylalanine. The interval Pro95 to Ser138 is disordered. Residues Gln98–His110 show a composition bias toward basic and acidic residues. Ser132 and Ser133 each carry phosphoserine; by PKB/AKT1. Residues Cys228–Arg269 form an RING-type zinc finger. The disordered stretch occupies residues Leu272–Phe304. A compositionally biased stretch (polar residues) spans Arg279–Ser296.

As to quaternary structure, interacts with RAB7A. Interacts with EGFR and FLT3. Interacts with BST2. Interacts with STX17. Interacts with YWHAE. Post-translationally, phosphorylated by AKT1, allowing association with the 14-3-3 chaperones that facilitates associating with TLRs. RING-type zinc finger-dependent and E2-dependent autoubiquitination. In terms of processing, deubiquitinated by USP9X; antogonizing its autoubiquitination and subsequent proteasomal degradation. Expressed at extremely low levels in normal breast, prostate, lung, colon. Higher levels of expression are detected in heart, skeletal muscle, testis as well as in breast and prostate cancer cells.

The protein resides in the cytoplasm. It localises to the nucleus. It is found in the endoplasmic reticulum. Its subcellular location is the golgi apparatus. The enzyme catalyses S-ubiquitinyl-[E2 ubiquitin-conjugating enzyme]-L-cysteine + [acceptor protein]-L-lysine = [E2 ubiquitin-conjugating enzyme]-L-cysteine + N(6)-ubiquitinyl-[acceptor protein]-L-lysine.. Its pathway is protein modification; protein ubiquitination. Functionally, E3 ubiquitin-protein ligase that catalyzes the 'Lys-48'- and/or 'Lys-63'-linked polyubiquitination of various substrates and thereby plays a role in a number of signaling pathways including autophagy, innate immunity, cell proliferation and cell death. Plays a role in the endosomal trafficking and degradation of membrane receptors including EGFR, FLT3, MET and CXCR4 through their polyubiquitination. Participates together with BST2 in antiviral immunity by facilitating the internalization of HIV-1 virions into intracellular vesicles leading to their lysosomal degradation. Also possesses an antiviral activity independently of BST2 by promoting retroviral GAG proteins ubiquitination, redistribution to endo-lysosomal compartments and, ultimately, lysosomal degradation. Catalyzes distinct types of ubiquitination on MAVS and STING1 at different phases of viral infection to promote innate antiviral response. Mediates the 'Lys-48'-linked ubiquitination of MAVS leading to its proteasomal degradation and ubiquitinates STING1 via 'Lys-63'-linked polyubiquitination, critical for its oligomerization and the subsequent recruitment of TBK1. Plays a positive role in the autophagosome-lysosome fusion by interacting with STX17 and enhancing its stability without affecting 'Lys-48'- or 'Lys-63'-linked polyubiquitination levels, which in turn promotes autophagosome maturation. Negatively regulates TLR-induced expression of proinflammatory cytokines by catalyzing 'Lys-11'-linked ubiquitination of RAB1A and RAB13 to inhibit post-ER trafficking of TLRs to the Golgi by RAB1A and subsequently from the Golgi apparatus to the cell surface by RAB13. This is E3 ubiquitin-protein ligase RNF115 from Homo sapiens (Human).